The primary structure comprises 159 residues: Urease subunit beta 2 (159 aa).

The interval 1 to 24 is disordered; sequence MAKEPTKAAHPQPEQTKTNHKAHR.

It belongs to the urease beta subunit family. Heterotrimer of UreA (gamma), UreB (beta) and UreC (alpha) subunits. Three heterotrimers associate to form the active enzyme.

The protein resides in the cytoplasm. It catalyses the reaction urea + 2 H2O + H(+) = hydrogencarbonate + 2 NH4(+). It participates in nitrogen metabolism; urea degradation; CO(2) and NH(3) from urea (urease route): step 1/1. Disrupting the ure2 operon has no effect on urease activity, or pathogen survival in BALB/c mice when inoculated by gavage, but confers slightly enhanced resistance to low pH killing in vitro. The chain is Urease subunit beta 2 from Brucella suis biovar 1 (strain 1330).